Consider the following 290-residue polypeptide: 33 kDa chaperonin (290 aa).

Cystine bridges form between Cys234–Cys236 and Cys267–Cys270.

Belongs to the HSP33 family. Under oxidizing conditions two disulfide bonds are formed involving the reactive cysteines. Under reducing conditions zinc is bound to the reactive cysteines and the protein is inactive.

Its subcellular location is the cytoplasm. Redox regulated molecular chaperone. Protects both thermally unfolding and oxidatively damaged proteins from irreversible aggregation. Plays an important role in the bacterial defense system toward oxidative stress. This Colwellia psychrerythraea (strain 34H / ATCC BAA-681) (Vibrio psychroerythus) protein is 33 kDa chaperonin.